The sequence spans 282 residues: 2-dehydro-3-deoxyphosphooctonate aldolase (282 aa).

The protein belongs to the KdsA family.

It is found in the cytoplasm. The enzyme catalyses D-arabinose 5-phosphate + phosphoenolpyruvate + H2O = 3-deoxy-alpha-D-manno-2-octulosonate-8-phosphate + phosphate. Its pathway is carbohydrate biosynthesis; 3-deoxy-D-manno-octulosonate biosynthesis; 3-deoxy-D-manno-octulosonate from D-ribulose 5-phosphate: step 2/3. It participates in bacterial outer membrane biogenesis; lipopolysaccharide biosynthesis. This is 2-dehydro-3-deoxyphosphooctonate aldolase from Shewanella sp. (strain MR-4).